The sequence spans 81 residues: Small ribosomal subunit protein bS16 (81 aa).

Belongs to the bacterial ribosomal protein bS16 family.

This is Small ribosomal subunit protein bS16 from Colwellia psychrerythraea (strain 34H / ATCC BAA-681) (Vibrio psychroerythus).